We begin with the raw amino-acid sequence, 311 residues long: MSDKSYQPTIAGLRAFVAVVEKGHFSAAASFLGVRQSTLSQALAALESGLGVQLIERSTRRVFVTTQGRHLLPRAQAAIEAMDAFTAAAAGESDPLRGGMRLGLIPTVAPYVLPTMLTGLTHRLPTLTLRVVEDQTEHLLTALREGALDAAMIALPVETAGIAEIPIYDEDFVLALPPGHPLSGKRRVPTTALAQLPLLLLDEGHCLRDQTLDICRKSGVQAELANTRAASLATAVQCVTGGLGVTLLPQSAAPVESVRSKLGLAQFAAPCPGRRIGLAFRSASGRSASYRQIAKIIGELISTEHHVRLVA.

Positions 8 to 65 (PTIAGLRAFVAVVEKGHFSAAASFLGVRQSTLSQALAALESGLGVQLIERSTRRVFVT) constitute an HTH lysR-type domain. Positions 25-44 (FSAAASFLGVRQSTLSQALA) form a DNA-binding region, H-T-H motif.

Belongs to the LysR transcriptional regulatory family.

Required for the induction the katG gene for catalase. Involved in the response to hydrogen peroxide. In Mycobacterium leprae (strain TN), this protein is Probable hydrogen peroxide-inducible genes activator (oxyR).